A 200-amino-acid polypeptide reads, in one-letter code: GTP-binding protein rho5 (200 aa).

13-20 is a binding site for GTP; the sequence is GDGACGKT. The Effector region signature appears at 35–43; that stretch reads YVPTVFENY. GTP-binding positions include 60–64 and 118–121; these read DTAGQ and CKVD. Position 197 is a cysteine methyl ester (Cys197). Cys197 carries S-geranylgeranyl cysteine lipidation. A propeptide spans 198 to 200 (removed in mature form); it reads ILL.

Belongs to the small GTPase superfamily. Rho family.

It localises to the cell membrane. This chain is GTP-binding protein rho5 (rho5), found in Schizosaccharomyces pombe (strain 972 / ATCC 24843) (Fission yeast).